Here is a 343-residue protein sequence, read N- to C-terminus: Ferredoxin--NADP reductase (343 aa).

The FAD site is built by D31, K39, Y43, V83, I118, D285, and S326.

It belongs to the ferredoxin--NADP reductase type 2 family. As to quaternary structure, homodimer. The cofactor is FAD.

The catalysed reaction is 2 reduced [2Fe-2S]-[ferredoxin] + NADP(+) + H(+) = 2 oxidized [2Fe-2S]-[ferredoxin] + NADPH. This Staphylococcus saprophyticus subsp. saprophyticus (strain ATCC 15305 / DSM 20229 / NCIMB 8711 / NCTC 7292 / S-41) protein is Ferredoxin--NADP reductase.